The sequence spans 385 residues: Benzoylsuccinyl-CoA thiolase subunit BbsB (385 aa).

Residue R19 coordinates CoA. Catalysis depends on C84, which acts as the Acyl-thioester intermediate. The CoA site is built by G121, R193, C204, and C205.

The protein belongs to the thiolase-like superfamily. Thiolase family. Heterotetramer composed of two BbsA subunits and two BbsB subunits. BbsB forms homodimeric subcomplexes. Both BbsA and BbsB are essential for enzymatic activity.

It catalyses the reaction (S)-2-benzoylsuccinyl-CoA + CoA = benzoyl-CoA + succinyl-CoA. It participates in xenobiotic degradation; toluene degradation. In terms of biological role, component of the BbsAB thiolase complex, which catalyzes the thiolytic cleavage of (S)-2-benzoylsuccinyl-CoA to succinyl-CoA and benzoyl-CoA, the final step of anaerobic toluene metabolism. The protein is Benzoylsuccinyl-CoA thiolase subunit BbsB of Thauera aromatica.